Reading from the N-terminus, the 564-residue chain is Dihydroxy-acid dehydratase (564 aa).

Position 78 (aspartate 78) interacts with Mg(2+). Residue cysteine 119 participates in [2Fe-2S] cluster binding. The Mg(2+) site is built by aspartate 120 and lysine 121. Lysine 121 bears the N6-carboxylysine mark. [2Fe-2S] cluster is bound at residue cysteine 192. Residue glutamate 451 participates in Mg(2+) binding. Serine 477 functions as the Proton acceptor in the catalytic mechanism.

It belongs to the IlvD/Edd family. In terms of assembly, homodimer. [2Fe-2S] cluster is required as a cofactor. Requires Mg(2+) as cofactor.

It catalyses the reaction (2R)-2,3-dihydroxy-3-methylbutanoate = 3-methyl-2-oxobutanoate + H2O. The catalysed reaction is (2R,3R)-2,3-dihydroxy-3-methylpentanoate = (S)-3-methyl-2-oxopentanoate + H2O. Its pathway is amino-acid biosynthesis; L-isoleucine biosynthesis; L-isoleucine from 2-oxobutanoate: step 3/4. The protein operates within amino-acid biosynthesis; L-valine biosynthesis; L-valine from pyruvate: step 3/4. Functions in the biosynthesis of branched-chain amino acids. Catalyzes the dehydration of (2R,3R)-2,3-dihydroxy-3-methylpentanoate (2,3-dihydroxy-3-methylvalerate) into 2-oxo-3-methylpentanoate (2-oxo-3-methylvalerate) and of (2R)-2,3-dihydroxy-3-methylbutanoate (2,3-dihydroxyisovalerate) into 2-oxo-3-methylbutanoate (2-oxoisovalerate), the penultimate precursor to L-isoleucine and L-valine, respectively. This chain is Dihydroxy-acid dehydratase, found in Nitratiruptor sp. (strain SB155-2).